The primary structure comprises 1125 residues: Angiopoietin-1 receptor (1125 aa).

An N-terminal signal peptide occupies residues 1–22 (MDSLAGLVLCGVSLLLSATVDG). Topologically, residues 23–748 (AMDLILINSL…PADLGGRKML (726 aa)) are extracellular. A disulfide bridge connects residues C44 and C102. Residues 44–123 (CIASGWRPHE…RTMKMRQQAS (80 aa)) form the Ig-like C2-type 1 domain. N-linked (GlcNAc...) asparagine glycosylation is present at N158. 3 EGF-like domains span residues 210–252 (RCEA…RTCE), 254–299 (ACEP…LQCN), and 301–341 (ACQP…LQCE). Cystine bridges form between C211-C220, C224-C233, C227-C240, C242-C251, C255-C264, C268-C274, C280-C287, C289-C298, C302-C311, C315-C323, C317-C329, C331-C340, and C370-C424. One can recognise an Ig-like C2-type 2 domain in the interval 350–440 (PKIEDLPDHI…GMVEKPFNIS (91 aa)). 3 Fibronectin type-III domains span residues 447-541 (PLNA…TASI), 545-637 (PPRG…TLSD), and 642-735 (QPEN…TLSE). A helical transmembrane segment spans residues 749-769 (LIAILGSAGMTCLTVLLAFLI). Topologically, residues 770 to 1125 (MLQLKRANVQ…GIDCSAEEAA (356 aa)) are cytoplasmic. The Protein kinase domain occupies 825 to 1097 (IKFQDVIGEG…QILVSLNRML (273 aa)). Residues 831–839 (IGEGNFGQV) and K856 contribute to the ATP site. Y861 is modified (phosphotyrosine; by autocatalysis). The Proton acceptor role is filled by D965. Phosphotyrosine; by autocatalysis is present on residues Y993, Y1103, and Y1109.

It belongs to the protein kinase superfamily. Tyr protein kinase family. Tie subfamily. In terms of assembly, homodimer. Heterodimer with TIE1. Interacts with ANGPT1, ANGPT2 and ANGPT4. At cell-cell contacts in quiescent cells, forms a signaling complex composed of ANGPT1 plus TEK molecules from two adjoining cells. In the absence of endothelial cell-cell contacts, interaction with ANGPT1 mediates contacts with the extracellular matrix. Interacts (tyrosine phosphorylated) with TNIP2. Interacts (tyrosine phosphorylated) with SHC1 (via SH2 domain). Interacts with PTPRB; this promotes endothelial cell-cell adhesion. Interacts with DOK2, GRB2, GRB7, GRB14, PIK3R1 and PTPN11/SHP2. Colocalizes with DOK2 at contacts with the extracellular matrix in migrating cells. Proteolytic processing leads to the shedding of the extracellular domain (soluble TIE-2 alias sTIE-2). Post-translationally, autophosphorylated on tyrosine residues in response to ligand binding. Autophosphorylation occurs in trans, i.e. one subunit of the dimeric receptor phosphorylates tyrosine residues on the other subunit. Autophosphorylation occurs in a sequential manner, where Tyr-993 in the kinase activation loop is phosphorylated first, followed by autophosphorylation at Tyr-1109 and at additional tyrosine residues. ANGPT1-induced phosphorylation is impaired during hypoxia, due to increased expression of ANGPT2. Phosphorylation is important for interaction with GRB14, PIK3R1 and PTPN11. Phosphorylation at Tyr-1103 is important for interaction with GRB2 and GRB7. Phosphorylation at Tyr-1109 is important for interaction with DOK2 and for coupling to downstream signal transduction pathways in endothelial cells. Dephosphorylated by PTPRB. In terms of processing, ubiquitinated. The phosphorylated receptor is ubiquitinated and internalized, leading to its degradation. Specifically expressed in developing vascular endothelial cells.

The protein resides in the cell membrane. It is found in the cell junction. It localises to the focal adhesion. Its subcellular location is the cytoplasm. The protein localises to the cytoskeleton. The protein resides in the secreted. The enzyme catalyses L-tyrosyl-[protein] + ATP = O-phospho-L-tyrosyl-[protein] + ADP + H(+). With respect to regulation, angiopoietin binding leads to receptor dimerization and activation by autophosphorylation at Tyr-993 on the kinase activation loop. Tyrosine-protein kinase that acts as a cell-surface receptor for ANGPT1, ANGPT2 and ANGPT4 and regulates angiogenesis, endothelial cell survival, proliferation, migration, adhesion and cell spreading, reorganization of the actin cytoskeleton, but also maintenance of vascular quiescence. Has anti-inflammatory effects by preventing the leakage of pro-inflammatory plasma proteins and leukocytes from blood vessels. Required for normal angiogenesis and heart development during embryogenesis. Required for post-natal hematopoiesis. After birth, activates or inhibits angiogenesis, depending on the context. Inhibits angiogenesis and promotes vascular stability in quiescent vessels, where endothelial cells have tight contacts. In quiescent vessels, ANGPT1 oligomers recruit TEK to cell-cell contacts, forming complexes with TEK molecules from adjoining cells, and this leads to preferential activation of phosphatidylinositol 3-kinase and the AKT1 signaling cascades. In migrating endothelial cells that lack cell-cell adhesions, ANGT1 recruits TEK to contacts with the extracellular matrix, leading to the formation of focal adhesion complexes, activation of PTK2/FAK and of the downstream kinases MAPK1/ERK2 and MAPK3/ERK1, and ultimately to the stimulation of sprouting angiogenesis. ANGPT1 signaling triggers receptor dimerization and autophosphorylation at specific tyrosine residues that then serve as binding sites for scaffold proteins and effectors. Signaling is modulated by ANGPT2 that has lower affinity for TEK, can promote TEK autophosphorylation in the absence of ANGPT1, but inhibits ANGPT1-mediated signaling by competing for the same binding site. Signaling is also modulated by formation of heterodimers with TIE1, and by proteolytic processing that gives rise to a soluble TEK extracellular domain. The soluble extracellular domain modulates signaling by functioning as decoy receptor for angiopoietins. TEK phosphorylates DOK2, GRB7, GRB14, PIK3R1, SHC1 and TIE1. The polypeptide is Angiopoietin-1 receptor (TEK) (Bos taurus (Bovine)).